The chain runs to 337 residues: Hairy/enhancer-of-split related with YRPW motif protein 2 (337 aa).

The interval 1–52 (MKRPCEETTSESDMDETIDVGSENNYSGQSTSSVIRLNSPTTTSQIMARKKR) is disordered. Residues 8–18 (TTSESDMDETI) are compositionally biased toward acidic residues. The segment covering 22–46 (SENNYSGQSTSSVIRLNSPTTTSQI) has biased composition (polar residues). Residues 47-116 (MARKKRRGII…GGKGYFDAHA (70 aa)) form a transcriptional repression and interaction with NCOR1 and SIN3A region. Positions 48 to 103 (ARKKRRGIIEKRRRDRINNSLSELRRLVPTAFEKQGSAKLEKAEILQMTVDHLKML) constitute a bHLH domain. An Orange domain is found at 122–157 (MSIGFRECLTEVARYLSSVEGLDSSDPLRVRLVSHL). Over residues 307–325 (LSVSATSSPQQTSSGTNNK) the composition is skewed to polar residues. Positions 307–337 (LSVSATSSPQQTSSGTNNKPYRPWGTEVGAF) are disordered. Residues 327 to 330 (YRPW) carry the YRPW motif motif.

The protein belongs to the HEY family. As to quaternary structure, may self-associate. Interacts with GATA4, HES1 and HEYL. Interacts with HDAC1, NCOR1 and SIN3A. Interacts with ARNT and GATA6.

It localises to the nucleus. In terms of biological role, downstream effector of Notch signaling which may be required for cardiovascular development. Transcriptional repressor which binds preferentially to the canonical E box sequence 5'-CACGTG-3'. Represses transcription by the cardiac transcriptional activators GATA4 and GATA6. In Homo sapiens (Human), this protein is Hairy/enhancer-of-split related with YRPW motif protein 2 (HEY2).